The following is a 116-amino-acid chain: Dynein light chain Tctex-type 3 (116 aa).

Tyr4 bears the 3'-nitrotyrosine mark.

This sequence belongs to the dynein light chain Tctex-type family. In terms of assembly, homodimer. The cytoplasmic dynein 1 complex consists of two catalytic heavy chains (HCs) and a number of non-catalytic subunits presented by intermediate chains (ICs), light intermediate chains (LICs) and light chains (LCs); the composition seems to vary in respect to the IC, LIC and LC composition. The heavy chain homodimer serves as a scaffold for the probable homodimeric assembly of the respective non-catalytic subunits. The ICs and LICs bind directly to the HC dimer and the LCs assemble on the IC dimer. DYNLT1 and DYNLT3 compete for association with dynein IC (DYNC1I1 or DYNC1I2). Self-associates. Interacts with DYNC1I1 and DYNC1I2. Interacts with BUB3. Interacts with SATB1 in nucleus to form complex with matrix attachment regions (MARs) of DNA.

It is found in the nucleus. Its subcellular location is the cytoplasm. The protein resides in the cytoskeleton. The protein localises to the chromosome. It localises to the centromere. It is found in the kinetochore. Functionally, acts as one of several non-catalytic accessory components of the cytoplasmic dynein 1 complex that are thought to be involved in linking dynein to cargos and to adapter proteins that regulate dynein function. Cytoplasmic dynein 1 acts as a motor for the intracellular retrograde motility of vesicles and organelles along microtubules. Probably binds BUB3 as part of transport cargo. Required for the efficient progression through mitosis. The polypeptide is Dynein light chain Tctex-type 3 (DYNLT3) (Ovis aries (Sheep)).